The sequence spans 142 residues: Large ribosomal subunit protein uL11 (142 aa).

The protein belongs to the universal ribosomal protein uL11 family. In terms of assembly, part of the ribosomal stalk of the 50S ribosomal subunit. Interacts with L10 and the large rRNA to form the base of the stalk. L10 forms an elongated spine to which L12 dimers bind in a sequential fashion forming a multimeric L10(L12)X complex. Post-translationally, one or more lysine residues are methylated.

Its function is as follows. Forms part of the ribosomal stalk which helps the ribosome interact with GTP-bound translation factors. This chain is Large ribosomal subunit protein uL11, found in Bradyrhizobium diazoefficiens (strain JCM 10833 / BCRC 13528 / IAM 13628 / NBRC 14792 / USDA 110).